The primary structure comprises 2009 residues: ADP-ribosylation factor guanine nucleotide-exchange factor SEC7 (2009 aa).

The interval 1–220 (MSEQNSVVNA…ISLSSNGSNT (220 aa)) is disordered. The span at 17-33 (ISSNVETASSVNPSVKP) shows a compositional bias: polar residues. The span at 37 to 53 (IKEEAKETNGEDQKCKG) shows a compositional bias: basic and acidic residues. Positions 91–118 (EGEDGDEDEDEDEDEDEDNGDEDDEDVD) are enriched in acidic residues. The segment covering 134-143 (SVSGESTESS) has biased composition (low complexity). A compositionally biased stretch (acidic residues) spans 144 to 154 (SGEDEESDESD). The segment covering 155–165 (GNTSNSSSGDE) has biased composition (low complexity). Residues 166–184 (SGSEEEEEEEEEEEEEENA) are compositionally biased toward acidic residues. Over residues 194–209 (SVPTNDSTAPRSTHTR) the composition is skewed to polar residues. The span at 210 to 220 (NISLSSNGSNT) shows a compositional bias: low complexity. Serine 212 and serine 215 each carry phosphoserine. A Phosphothreonine modification is found at threonine 334. Residues serine 447, serine 452, and serine 455 each carry the phosphoserine modification. Residues 653-657 (NYDCN) carry the HUS box motif. Positions 771–788 (SSARQESRSSLSNDVRSS) are enriched in low complexity. The disordered stretch occupies residues 771–814 (SSARQESRSSLSNDVRSSIMTSNDDFKPTYEDEESRSLSSQNID). A Glycyl lysine isopeptide (Lys-Gly) (interchain with G-Cter in ubiquitin) cross-link involves residue lysine 797. Serine 807 carries the phosphoserine modification. One can recognise an SEC7 domain in the interval 824–1010 (LKLRKTALSE…LFNEIANNEI (187 aa)). A Mg(2+)-binding site is contributed by aspartate 940. Residues 1017–1220 (HQAMLSGDTN…QARVANPRVS (204 aa)) are HDS1 domain. Serine 1226 carries the phosphoserine modification. Position 1240 is a phosphothreonine (threonine 1240). Residues 1708–1723 (GRKSSVSHHQTTNDTS) show a composition bias toward polar residues. The interval 1708 to 1803 (GRKSSVSHHQ…KKTKHMKRNE (96 aa)) is disordered. A compositionally biased stretch (basic and acidic residues) spans 1724–1751 (QHSDDDSNDRRENDSNISETVERAHQEE). Serine 1741 and serine 1752 each carry phosphoserine. Residues 1764-1777 (LNGQTKLNNGNSVP) show a composition bias toward polar residues. The tract at residues 1836–1883 (FENEDFAHCIPYKEAIRITRLLEKSYEFSRDFNEDYGLRTRLVEARVV) is C2 domain-interacting region (CIR).

As to quaternary structure, interacts with ARF1. Interacts (via C-terminus) with RSP5 ubiquitin ligase.

The protein localises to the cytoplasm. It localises to the golgi apparatus. Its subcellular location is the trans-Golgi network. It is found in the cytoplasmic vesicle. The protein resides in the COPI-coated vesicle membrane. The protein localises to the COPII-coated vesicle membrane. Functionally, guanine exchange factor that acts as an activator of ARF1 at the trans-Golgi network and is thus involved in vesicular budding and traffic between compartments of the Golgi apparatus. Activation of Arf (ADP-ribosylation factor) GTPases is essential for vesicle formation via recruitment of cargo adapters and coat proteins necessary for Golgi trafficking. Also plays an essential role in ER-to-Golgi traffic. SEC7 also acts as an effector of two Rab GTPases, YPT1 and YPT31/32. This is ADP-ribosylation factor guanine nucleotide-exchange factor SEC7 from Saccharomyces cerevisiae (strain ATCC 204508 / S288c) (Baker's yeast).